Reading from the N-terminus, the 643-residue chain is Inner kinetochore subunit cnp3 (643 aa).

Disordered stretches follow at residues 55 to 209 (SIHL…AFPD) and 224 to 386 (SIKD…QSDS). Composition is skewed to low complexity over residues 85-97 (AASD…SSSD) and 104-125 (DIPS…GSSG). Positions 166-185 (DFSRIKASPDRKKFEPRRST) are enriched in basic and acidic residues. 3 stretches are compositionally biased toward polar residues: residues 235–261 (YIQT…PSKQ), 295–304 (LNRSLANNSQ), and 313–322 (KPLQESSINS). Basic residues-rich tracts occupy residues 332–341 (VKRKRGRPRK) and 360–370 (GAKKPAIRNAK). Positions 333–345 (KRKRGRPRKNKLE) form a DNA-binding region, a.T hook.

The protein belongs to the CENP-C/MIF2 family. In terms of assembly, component of the inner kinetochore constitutive centromere-associated network (CCAN) (also known as central kinetochore Sim4 complex in fission yeast), which is composed of at least cnl2, cnp3, cnp20, fta1, fta2, fta3, fta4, fta6, fta7, mal2, mhf1, mhf2, mis6, mis15, mis17, sim4 and wip1.

The protein localises to the nucleus. It localises to the nucleoplasm. Functionally, component of the kinetochore, a multiprotein complex that assembles on centromeric DNA and attaches chromosomes to spindle microtubules, mediating chromosome segregation and sister chromatid segregation during meiosis and mitosis. Component of the inner kinetochore constitutive centromere-associated network (CCAN), which serves as a structural platform for outer kinetochore assembly. The sequence is that of Inner kinetochore subunit cnp3 (cnp3) from Schizosaccharomyces pombe (strain 972 / ATCC 24843) (Fission yeast).